The primary structure comprises 94 residues: Large ribosomal subunit protein uL23cz (94 aa).

It belongs to the universal ribosomal protein uL23 family. As to quaternary structure, part of the 50S ribosomal subunit.

The protein localises to the plastid. It is found in the chloroplast. Functionally, binds to 23S rRNA. This Agrostis stolonifera (Creeping bentgrass) protein is Large ribosomal subunit protein uL23cz (rpl23-A).